The chain runs to 800 residues: Phenylalanine--tRNA ligase beta subunit (800 aa).

Positions 39–154 (TKDIKNLVVG…EAQVPGTDAL (116 aa)) constitute a tRNA-binding domain. One can recognise a B5 domain in the interval 408-483 (AFITPIDITA…RIYGYDDIPS (76 aa)). The Mg(2+) site is built by Asp-461, Asp-467, Glu-470, and Glu-471. The FDX-ACB domain occupies 708 to 800 (PRFPGMSRDI…ALIEQGAVIR (93 aa)).

This sequence belongs to the phenylalanyl-tRNA synthetase beta subunit family. Type 1 subfamily. In terms of assembly, tetramer of two alpha and two beta subunits. The cofactor is Mg(2+).

Its subcellular location is the cytoplasm. The enzyme catalyses tRNA(Phe) + L-phenylalanine + ATP = L-phenylalanyl-tRNA(Phe) + AMP + diphosphate + H(+). The chain is Phenylalanine--tRNA ligase beta subunit from Staphylococcus aureus (strain USA300).